The sequence spans 732 residues: Prolyl 3-hydroxylase 3 (732 aa).

The first 19 residues, 1–19, serve as a signal peptide directing secretion; sequence MLRLLRLLLLLLLPPPGSP. The span at 15 to 25 shows a compositional bias: pro residues; the sequence is PPGSPEPPEPP. Residues 15–35 form a disordered region; that stretch reads PPGSPEPPEPPGLAQLSPGSP. TPR repeat units follow at residues 39–72, 152–185, 214–247, and 312–345; these read PDLL…RAAL, REPY…NPTH, YWAA…SLAH, and LSQL…YPED. N-linked (GlcNAc...) asparagine glycosylation is found at Asn-327 and Asn-458. The Fe2OG dioxygenase domain occupies 557–671; it reads THLVCRSAIE…RCALALWHTW (115 aa). 3 residues coordinate Fe cation: His-580, Asp-582, and His-652. The active site involves Arg-662. The stretch at 674–703 forms a coiled coil; sequence EHSEQEWTEAKELLQEEEEEEEEEDILSRD. The segment covering 676-687 has biased composition (basic and acidic residues); that stretch reads SEQEWTEAKELL. Residues 676–732 are disordered; sequence SEQEWTEAKELLQEEEEEEEEEDILSRDPSPEPPSHKLQRVQEKAGKPRRVRVREEL. The span at 688–698 shows a compositional bias: acidic residues; that stretch reads QEEEEEEEEED. Residues 722 to 732 are compositionally biased toward basic residues; the sequence is KPRRVRVREEL. The Prevents secretion from ER motif lies at 729–732; sequence REEL.

The protein belongs to the leprecan family. As to quaternary structure, identified in a complex with PLOD1 and P3H4. It depends on Fe cation as a cofactor. L-ascorbate is required as a cofactor. Detected in kidney (at protein level).

The protein resides in the endoplasmic reticulum. The enzyme catalyses L-prolyl-[collagen] + 2-oxoglutarate + O2 = trans-3-hydroxy-L-prolyl-[collagen] + succinate + CO2. Its function is as follows. Part of a complex composed of PLOD1, P3H3 and P3H4 that catalyzes hydroxylation of lysine residues in collagen alpha chains and is required for normal assembly and cross-linkling of collagen fibrils. Required for normal hydroxylation of lysine residues in type I collagen chains in skin, bone, tendon, aorta and cornea. Required for normal skin stability via its role in hydroxylation of lysine residues in collagen alpha chains and in collagen fibril assembly. Apparently not required for normal prolyl 3-hydroxylation on collagen chains, possibly because it functions redundantly with other prolyl 3-hydroxylases. This is Prolyl 3-hydroxylase 3 from Mus musculus (Mouse).